The primary structure comprises 174 residues: RxLR effector protein 207 (174 aa).

Residues 1–20 (MSKVFLLLVLSVFALVSCDA) form the signal peptide. The short motif at 46–62 (RMLRAQEEPTNAADEER) is the RxLR-dEER element. Residues 82-99 (VTNSKLVQSMNNKLASLT) are disordered.

The protein belongs to the RxLR effector family. Interacts with Nicotiana benthamiana ACD11, BPA1 (binding partner of ACD11), as well as BPA-like proteins BPL1, BPL2, BPL3 and BPL4.

Its subcellular location is the secreted. It is found in the host cell membrane. Secreted effector that activates ROS-mediated cell death in plant host and is essential for virulence. Plays a role in the transition from the biotrophic to necrotrophic stage. Associates with and promotes the degradation of Nicotiana benthamiana BPA1, BPL1, BPL2, and BPL4 to disrupt ACD11 stabilization in a 26S proteasome-dependent manner. This is RxLR effector protein 207 from Phytophthora capsici.